A 138-amino-acid chain; its full sequence is Putative membrane protein ORF6 (138 aa).

The next 2 membrane-spanning stretches (helical) occupy residues 4-20 (LTII…HAVL) and 37-53 (VVVL…LMTI).

The protein localises to the membrane. The chain is Putative membrane protein ORF6 (ORF6) from Ictalurid herpesvirus 1 (strain Auburn) (IcHV-1).